Reading from the N-terminus, the 267-residue chain is Myeloid leukemia factor 1 (267 aa).

Phosphoserine occurs at positions 6, 8, 32, and 34. A disordered region spans residues arginine 39 to alanine 67. Positions arginine 50 to glutamine 125 are interaction with COPS3.

The protein belongs to the MLF family. Interacts with CENPU. Also interacts with NRBP1/MADM, YWHAZ/14-3-3-zeta and HNRPUL2/MANP. NRBP1 recruits a serine kinase which phosphorylates both itself and MLF1. Phosphorylated MLF1 then binds to YWHAZ and is retained in the cytoplasm. Retained in the nucleus by binding to HNRPUL2. Binds to COPS3/CSN3 which is required for suppression of COP1 and activation of p53. In terms of processing, phosphorylation is required for binding to YWHAZ. In terms of tissue distribution, highly expressed in skeletal muscle, heart, testis. Also found in lung, but not in spleen, thymus, bone marrow, liver and kidney.

It localises to the cytoplasm. The protein localises to the nucleus. Its subcellular location is the cell projection. The protein resides in the cilium. It is found in the cytoskeleton. It localises to the cilium basal body. Functionally, involved in lineage commitment of primary hemopoietic progenitors by restricting erythroid formation and enhancing myeloid formation. Interferes with erythropoietin-induced erythroid terminal differentiation by preventing cells from exiting the cell cycle through suppression of CDKN1B/p27Kip1 levels. Suppresses COP1 activity via CSN3 which activates p53 and induces cell cycle arrest. Binds DNA and affects the expression of a number of genes so may function as a transcription factor in the nucleus. The protein is Myeloid leukemia factor 1 (Mlf1) of Mus musculus (Mouse).